A 162-amino-acid chain; its full sequence is Endoribonuclease YbeY (162 aa).

Residues His128, His132, and His138 each coordinate Zn(2+).

The protein belongs to the endoribonuclease YbeY family. Zn(2+) is required as a cofactor.

The protein localises to the cytoplasm. Its function is as follows. Single strand-specific metallo-endoribonuclease involved in late-stage 70S ribosome quality control and in maturation of the 3' terminus of the 16S rRNA. This Lactococcus lactis subsp. lactis (strain IL1403) (Streptococcus lactis) protein is Endoribonuclease YbeY.